A 103-amino-acid chain; its full sequence is Integration host factor subunit beta (103 aa).

Belongs to the bacterial histone-like protein family. Heterodimer of an alpha and a beta chain.

This protein is one of the two subunits of integration host factor, a specific DNA-binding protein that functions in genetic recombination as well as in transcriptional and translational control. The sequence is that of Integration host factor subunit beta from Sinorhizobium medicae (strain WSM419) (Ensifer medicae).